Reading from the N-terminus, the 69-residue chain is Large ribosomal subunit protein uL29 (69 aa).

It belongs to the universal ribosomal protein uL29 family.

The protein is Large ribosomal subunit protein uL29 of Mycoplasmopsis agalactiae (strain NCTC 10123 / CIP 59.7 / PG2) (Mycoplasma agalactiae).